A 477-amino-acid polypeptide reads, in one-letter code: S-triazine hydrolase (477 aa).

2 stretches are compositionally biased toward low complexity: residues 38–73 (SPTTSTSAAPKSSTPPGWQCSPASSTPTPTSHKSSS) and 120–132 (PLSSTTRTSDPTT). Disordered stretches follow at residues 38-77 (SPTTSTSAAPKSSTPPGWQCSPASSTPTPTSHKSSSGVVH) and 120-143 (PLSSTTRTSDPTTSPAPGPPGSPF).

The protein belongs to the metallo-dependent hydrolases superfamily. ATZ/TRZ family.

The protein operates within xenobiotic degradation; melamine degradation. Functionally, hydrolytic deamination of the S-triazine substrate melamine. In Gordonia rubripertincta (Rhodococcus corallinus), this protein is S-triazine hydrolase (trzA).